The following is a 117-amino-acid chain: Anti-sigma F factor antagonist (117 aa).

The 114-residue stretch at 2 to 115 (HFQLEMVTRE…QAIDRVRGIV (114 aa)) folds into the STAS domain. At S58 the chain carries Phosphoserine.

This sequence belongs to the anti-sigma-factor antagonist family. In terms of processing, phosphorylated by SpoIIAB on a serine residue.

In the phosphorylated form it could act as an anti-anti-sigma factor that counteracts SpoIIAB and thus releases sigma f from inhibition. The protein is Anti-sigma F factor antagonist (spoIIAA) of Lysinibacillus sphaericus (Bacillus sphaericus).